We begin with the raw amino-acid sequence, 393 residues long: Probable hydrolase sll0100 (393 aa).

It belongs to the peptidase M20 family.

In Synechocystis sp. (strain ATCC 27184 / PCC 6803 / Kazusa), this protein is Probable hydrolase sll0100.